A 141-amino-acid polypeptide reads, in one-letter code: Protein wingless (141 aa).

Serine 3 carries the O-palmitoleoyl serine; by PORCN lipid modification. The span at 40–49 (TDLEAPTQRN) shows a compositional bias: polar residues. The disordered stretch occupies residues 40–61 (TDLEAPTQRNDAAPHRAPRRER). A disulfide bond links cysteine 107 and cysteine 122. N-linked (GlcNAc...) asparagine glycosylation is found at asparagine 108 and asparagine 138.

The protein belongs to the Wnt family. Palmitoleoylated by porcupine. The lipid group functions as a sorting signal, targeting the ligand to polarized vesicles that transport wg to unique sites at the cell surface. Depalmitoleoylated by notum, leading to inhibit Wnt signaling pathway.

Its subcellular location is the secreted. The protein localises to the extracellular space. The protein resides in the extracellular matrix. Its function is as follows. Segment polarity protein. Binds to the frizzled seven-transmembrane receptors. This protein is probably a growth factor. The protein is Protein wingless (WG) of Manduca sexta (Tobacco hawkmoth).